A 408-amino-acid chain; its full sequence is CST complex subunit STN1 (408 aa).

Residues M8–P195 form an interaction with CTC1 region. The OB DNA-binding region spans V64–V165. Winged helix-turn-helix (wHTH) stretches follow at residues E201 to S304 and K305 to F408.

Belongs to the STN1 family. Component of the CST complex, composed of TEN1/C17orf106, CTC1/C17orf68 and STN1; in the complex interacts directly with TEN1 and CTC1. Interacts with ACD/TPP1, POT1 and POLA1.

The protein localises to the nucleus. It localises to the chromosome. The protein resides in the telomere. Functionally, component of the CST complex proposed to act as a specialized replication factor promoting DNA replication under conditions of replication stress or natural replication barriers such as the telomere duplex. The CST complex binds single-stranded DNA with high affinity in a sequence-independent manner, while isolated subunits bind DNA with low affinity by themselves. Initially the CST complex has been proposed to protect telomeres from DNA degradation. However, the CST complex has been shown to be involved in several aspects of telomere replication. The CST complex inhibits telomerase and is involved in telomere length homeostasis; it is proposed to bind to newly telomerase-synthesized 3' overhangs and to terminate telomerase action implicating the association with the ACD:POT1 complex thus interfering with its telomerase stimulation activity. The CST complex is also proposed to be involved in fill-in synthesis of the telomeric C-strand probably implicating recruitment and activation of DNA polymerase alpha. The CST complex facilitates recovery from many forms of exogenous DNA damage; seems to be involved in the re-initiation of DNA replication at repaired forks and/or dormant origins. Required for efficicient replication of the duplex region of the telomere. Promotes efficient replication of lagging-strand telomeres. Promotes general replication start following replication-fork stalling implicating new origin firing. May be in involved in C-strand fill-in during late S/G2 phase independent of its role in telomere duplex replication. This is CST complex subunit STN1 from Rattus norvegicus (Rat).